Here is a 966-residue protein sequence, read N- to C-terminus: Mitogen-activated protein kinase kinase kinase 13 (966 aa).

Disordered stretches follow at residues Met-1–Lys-22 and Ser-93–Gly-112. Polar residues predominate over residues Ala-96–Gly-112. The 242-residue stretch at Ile-168–Ile-409 folds into the Protein kinase domain. Residues Leu-174 to Val-182 and Lys-195 each bind ATP. The active-site Proton acceptor is the Asp-279. Leucine-zipper stretches follow at residues Val-433–Leu-454 and Leu-486–Val-507. Disordered regions lie at residues Lys-534–His-652, Asp-744–Arg-834, Ser-846–Leu-873, and Asp-887–Leu-906. The segment covering Ser-567–Lys-581 has biased composition (low complexity). A compositionally biased stretch (basic residues) spans Ser-582–Asn-594. 2 stretches are compositionally biased toward polar residues: residues Gln-609 to Pro-629 and Phe-781 to Leu-795. Over residues Asp-814–Val-827 the composition is skewed to acidic residues. Residues Ser-815 to Glu-828 are acidic. The segment covering Ser-846–Val-855 has biased composition (polar residues).

This sequence belongs to the protein kinase superfamily. STE Ser/Thr protein kinase family. MAP kinase kinase kinase subfamily. Homodimer; forms dimers through the leucine-zipper motif. Interacts with the C-terminus of MAPK8IP1 through the kinase catalytic domain. Binds PRDX3. Associates with the IKK complex through the kinase domain. Mg(2+) is required as a cofactor. Autophosphorylated on serine and threonine residues.

The protein localises to the cytoplasm. Its subcellular location is the membrane. It catalyses the reaction L-seryl-[protein] + ATP = O-phospho-L-seryl-[protein] + ADP + H(+). The enzyme catalyses L-threonyl-[protein] + ATP = O-phospho-L-threonyl-[protein] + ADP + H(+). With respect to regulation, activated by autophosphorylation and homodimerization. Activates the JUN N-terminal pathway through activation of the MAP kinase kinase MAP2K7. Acts synergistically with PRDX3 to regulate the activation of NF-kappa-B in the cytosol. This activation is kinase-dependent and involves activating the IKK complex, the IKBKB-containing complex that phosphorylates inhibitors of NF-kappa-B. The polypeptide is Mitogen-activated protein kinase kinase kinase 13 (Pongo abelii (Sumatran orangutan)).